A 424-amino-acid polypeptide reads, in one-letter code: GTPase Obg (424 aa).

The Obg domain maps to 1 to 158 (MFYDQAKIYV…RNLLLELKLL (158 aa)). Positions 159–329 (ADVGLVGFPN…LVYAAAKALP (171 aa)) constitute an OBG-type G domain. GTP contacts are provided by residues 165 to 172 (GFPNVGKS), 190 to 194 (FTTLV), 212 to 215 (DIPG), 282 to 285 (NKMD), and 310 to 312 (SAA). Ser172 and Thr192 together coordinate Mg(2+). In terms of domain architecture, OCT spans 347-424 (TQASAPHRFE…IAGIEFEWEE (78 aa)).

This sequence belongs to the TRAFAC class OBG-HflX-like GTPase superfamily. OBG GTPase family. Monomer. It depends on Mg(2+) as a cofactor.

The protein resides in the cytoplasm. In terms of biological role, an essential GTPase which binds GTP, GDP and possibly (p)ppGpp with moderate affinity, with high nucleotide exchange rates and a fairly low GTP hydrolysis rate. Plays a role in control of the cell cycle, stress response, ribosome biogenesis and in those bacteria that undergo differentiation, in morphogenesis control. This Desulfitobacterium hafniense (strain DSM 10664 / DCB-2) protein is GTPase Obg.